Consider the following 449-residue polypeptide: Ktr system potassium uptake protein D (449 aa).

10 consecutive transmembrane segments (helical) span residues leucine 17 to alanine 37, threonine 46 to valine 66, isoleucine 75 to glycine 95, valine 133 to leucine 153, phenylalanine 194 to valine 214, isoleucine 235 to glutamate 255, leucine 297 to isoleucine 317, leucine 355 to threonine 375, leucine 380 to isoleucine 400, and valine 411 to glycine 431.

Belongs to the TrkH potassium transport family. Ktr (TC 2.A.38.4) subfamily. Homodimer. Part of the KtrCD complex formed by an octameric catalytic ring of KtrC and a membrane associated dimer of KtrD forming a potassium channel.

Its subcellular location is the cell membrane. Functionally, integral membrane subunit of the KtrCD potassium uptake transporter. The 2 major potassium transporter complexes KtrAB and KtrCD confer resistance to both suddenly imposed and prolonged osmotic stress. The polypeptide is Ktr system potassium uptake protein D (ktrD) (Bacillus subtilis (strain 168)).